The following is a 1331-amino-acid chain: Xanthine dehydrogenase/oxidase (1331 aa).

The 2Fe-2S ferredoxin-type domain maps to 4-91 (DELVFFVNGK…HVAVTTVEGI (88 aa)). [2Fe-2S] cluster-binding residues include Cys43, Cys48, Cys51, Cys73, Cys113, Cys116, Cys148, and Cys150. The FAD-binding PCMH-type domain occupies 229-412 (FEGERVTWIQ…LSIEIPYSRE (184 aa)). Residues 257 to 264 (LVVGNTEI), Phe335, 345 to 349 (SIGGN), Asp358, Leu402, and Lys420 each bind FAD. Residues Cys534 and Cys991 are joined by a disulfide bond. Mo-molybdopterin is bound by residues Gln766 and Phe797. The substrate site is built by Glu801 and Arg879. Arg911 is a binding site for Mo-molybdopterin. The substrate site is built by Phe913 and Thr1009. Position 1078 (Ala1078) interacts with Mo-molybdopterin. The Proton acceptor role is filled by Glu1260.

The protein belongs to the xanthine dehydrogenase family. In terms of assembly, homodimer. Interacts with BTN1A1. FAD is required as a cofactor. Requires Mo-molybdopterin as cofactor. It depends on [2Fe-2S] cluster as a cofactor. Subject to partial proteolysis; this alters the enzyme from the dehydrogenase form (D) to the oxidase form (O). In terms of processing, contains sulfhydryl groups that are easily oxidized (in vitro); this alters the enzyme from the dehydrogenase form (D) to the oxidase form (O).

The protein localises to the cytoplasm. Its subcellular location is the peroxisome. The protein resides in the secreted. It carries out the reaction xanthine + NAD(+) + H2O = urate + NADH + H(+). The enzyme catalyses hypoxanthine + NAD(+) + H2O = xanthine + NADH + H(+). It catalyses the reaction xanthine + O2 + H2O = urate + H2O2. Can be converted from the dehydrogenase form (D) to the oxidase form (O) irreversibly by proteolysis or reversibly through the oxidation of sulfhydryl groups. Key enzyme in purine degradation. Catalyzes the oxidation of hypoxanthine to xanthine. Catalyzes the oxidation of xanthine to uric acid. Contributes to the generation of reactive oxygen species. This is Xanthine dehydrogenase/oxidase (XDH) from Felis catus (Cat).